Reading from the N-terminus, the 151-residue chain is Protein ripply1 (151 aa).

Positions 57–60 (WRPW) match the WRPW motif motif. The interval 96-131 (HPVRLFWPKSRSFDYLYSAGEILLQNFPVQATINLY) is ripply homology domain. The tract at residues 130–151 (LYEDSDSEEEEEDEEQEDEEEK) is disordered. Residues 132–151 (EDSDSEEEEEDEEQEDEEEK) show a composition bias toward acidic residues.

The protein belongs to the ripply family.

It localises to the nucleus. Its function is as follows. Plays a role in somitogenesis. Essential for transcriptional repression of the segmental patterning genes, thus terminating the segmentation program in the presomitic mesoderm, and also required for the maintenance of rostrocaudal polarity in somites. The sequence is that of Protein ripply1 from Homo sapiens (Human).